The chain runs to 746 residues: Protein Niban 2 (746 aa).

A lipid anchor (N-myristoyl glycine) is attached at G2. Residues 68–192 enclose the PH domain; that stretch reads RIVFSGNLFQ…WQAVLQDCIR (125 aa). Phosphoserine occurs at positions 568, 574, 601, and 603. Positions 590-746 are disordered; the sequence is GEEYSNSGGG…EDSAGVQTEF (157 aa). A Phosphothreonine modification is found at T606. Phosphoserine occurs at positions 609, 624, 638, 641, 646, 665, 681, 692, and 696. Residues 671 to 693 are compositionally biased toward low complexity; that stretch reads PLLNGAPAGESPQPKAAPEASSP. Polar residues predominate over residues 720–746; that stretch reads GEQVSSPSSHPALHTTTEDSAGVQTEF.

Belongs to the Niban family. Phosphorylated at Ser-641, Ser-646, Ser-692 and Ser-696 by the BRAF/MKK/ERK signaling cascade. In melanoma cells, the C-terminal phosphorylation may prevent targeting to the plasma membrane. Post-translationally, as apoptosis proceeds, degraded via an proteasome-independent pathway, probably by caspases.

It is found in the cytoplasm. The protein localises to the cytosol. Its subcellular location is the cell junction. The protein resides in the adherens junction. It localises to the membrane. Its function is as follows. May play a role in apoptosis suppression. May promote melanoma cell invasion in vitro. In Homo sapiens (Human), this protein is Protein Niban 2.